Here is a 222-residue protein sequence, read N- to C-terminus: ATP synthase F(0) complex subunit a (222 aa).

The next 6 membrane-spanning stretches (helical) occupy residues 7 to 27, 64 to 84, 93 to 113, 132 to 152, 160 to 180, and 185 to 205; these read AFFD…AILL, WSLM…LGLL, QLTV…ILGF, FLIP…PVTL, ITAG…LLSI, and ITVT…VALI.

This sequence belongs to the ATPase A chain family. In terms of assembly, component of the ATP synthase complex composed at least of ATP5F1A/subunit alpha, ATP5F1B/subunit beta, ATP5MC1/subunit c (homooctomer), MT-ATP6/subunit a, MT-ATP8/subunit 8, ATP5ME/subunit e, ATP5MF/subunit f, ATP5MG/subunit g, ATP5MK/subunit k, ATP5MJ/subunit j, ATP5F1C/subunit gamma, ATP5F1D/subunit delta, ATP5F1E/subunit epsilon, ATP5PF/subunit F6, ATP5PB/subunit b, ATP5PD/subunit d, ATP5PO/subunit OSCP. ATP synthase complex consists of a soluble F(1) head domain (subunits alpha(3) and beta(3)) - the catalytic core - and a membrane F(0) domain - the membrane proton channel (subunits c, a, 8, e, f, g, k and j). These two domains are linked by a central stalk (subunits gamma, delta, and epsilon) rotating inside the F1 region and a stationary peripheral stalk (subunits F6, b, d, and OSCP). Interacts with DNAJC30; interaction is direct.

Its subcellular location is the mitochondrion inner membrane. The catalysed reaction is H(+)(in) = H(+)(out). In terms of biological role, subunit a, of the mitochondrial membrane ATP synthase complex (F(1)F(0) ATP synthase or Complex V) that produces ATP from ADP in the presence of a proton gradient across the membrane which is generated by electron transport complexes of the respiratory chain. ATP synthase complex consist of a soluble F(1) head domain - the catalytic core - and a membrane F(1) domain - the membrane proton channel. These two domains are linked by a central stalk rotating inside the F(1) region and a stationary peripheral stalk. During catalysis, ATP synthesis in the catalytic domain of F(1) is coupled via a rotary mechanism of the central stalk subunits to proton translocation. With the subunit c (ATP5MC1), forms the proton-conducting channel in the F(0) domain, that contains two crucial half-channels (inlet and outlet) that facilitate proton movement from the mitochondrial intermembrane space (IMS) into the matrix. Protons are taken up via the inlet half-channel and released through the outlet half-channel, following a Grotthuss mechanism. The chain is ATP synthase F(0) complex subunit a from Mammuthus primigenius (Siberian woolly mammoth).